A 514-amino-acid chain; its full sequence is Peptide chain release factor 3 (514 aa).

The tr-type G domain occupies 8 to 268 (KKRRTFAIIS…TFLKFAPEPH (261 aa)). GTP is bound by residues 17 to 24 (SHPDAGKT), 85 to 89 (DTPGH), and 139 to 142 (NKLD).

This sequence belongs to the TRAFAC class translation factor GTPase superfamily. Classic translation factor GTPase family. PrfC subfamily.

It localises to the cytoplasm. Increases the formation of ribosomal termination complexes and stimulates activities of RF-1 and RF-2. It binds guanine nucleotides and has strong preference for UGA stop codons. It may interact directly with the ribosome. The stimulation of RF-1 and RF-2 is significantly reduced by GTP and GDP, but not by GMP. In Streptococcus pneumoniae serotype 19F (strain G54), this protein is Peptide chain release factor 3.